The following is a 554-amino-acid chain: Developmental and secondary metabolism regulator ve-1 (554 aa).

The Velvet domain occupies 31 to 230 (GRKLWYSLRV…AEQGCRVRIR (200 aa)). The Nuclear localization signal signature appears at 45-50 (LRARAC). Residues 166-175 (TKEDKDKDPE) show a composition bias toward basic and acidic residues. 3 disordered regions span residues 166-190 (TKED…SFDF), 232-430 (DVRM…PHRL), and 465-528 (PRAY…VDDK). Over residues 276 to 292 (RSMSGSTERTPYSSISD) the composition is skewed to polar residues. Pro residues-rich tracts occupy residues 363–372 (SYPPPPPPHQ) and 485–494 (LPPPPPPPPQ). Residues 455-487 (SPSNMAAPPYPRAYSVSNSGGLTSAGGYNQLPP) form a PEST region. Positions 500–528 (RAHDQTFRADPEMRRYQDGARERESVDDK) are enriched in basic and acidic residues.

It belongs to the velvet family. VeA subfamily. In terms of assembly, component of the heterotrimeric velvet complex composed of lae-1, ve-1 and vel-2; Ve-1 acting as a bridging protein between lae-1 and vel-2.

It localises to the nucleus. Its subcellular location is the cytoplasm. In terms of biological role, component of the velvet transcription factor complex that controls sexual/asexual developmental ratio in response to light, promoting sexual development in the darkness while stimulating asexual sporulation under illumination. The velvet complex hat acts as a global regulator for secondary metabolite gene expression. The protein is Developmental and secondary metabolism regulator ve-1 of Neurospora crassa (strain ATCC 24698 / 74-OR23-1A / CBS 708.71 / DSM 1257 / FGSC 987).